Consider the following 127-residue polypeptide: Small ribosomal subunit protein uS13 (127 aa).

It belongs to the universal ribosomal protein uS13 family. In terms of assembly, part of the 30S ribosomal subunit. Forms a loose heterodimer with protein S19. Forms two bridges to the 50S subunit in the 70S ribosome.

Functionally, located at the top of the head of the 30S subunit, it contacts several helices of the 16S rRNA. In the 70S ribosome it contacts the 23S rRNA (bridge B1a) and protein L5 of the 50S subunit (bridge B1b), connecting the 2 subunits; these bridges are implicated in subunit movement. Contacts the tRNAs in the A and P-sites. The sequence is that of Small ribosomal subunit protein uS13 from Pelagibacter ubique (strain HTCC1062).